A 468-amino-acid polypeptide reads, in one-letter code: ATP synthase subunit beta (468 aa).

Residue 155–162 coordinates ATP; sequence GGAGVGKT.

It belongs to the ATPase alpha/beta chains family. F-type ATPases have 2 components, CF(1) - the catalytic core - and CF(0) - the membrane proton channel. CF(1) has five subunits: alpha(3), beta(3), gamma(1), delta(1), epsilon(1). CF(0) has three main subunits: a(1), b(2) and c(9-12). The alpha and beta chains form an alternating ring which encloses part of the gamma chain. CF(1) is attached to CF(0) by a central stalk formed by the gamma and epsilon chains, while a peripheral stalk is formed by the delta and b chains.

It is found in the cell membrane. The catalysed reaction is ATP + H2O + 4 H(+)(in) = ADP + phosphate + 5 H(+)(out). Produces ATP from ADP in the presence of a proton gradient across the membrane. The catalytic sites are hosted primarily by the beta subunits. This Streptococcus pneumoniae serotype 19F (strain G54) protein is ATP synthase subunit beta.